We begin with the raw amino-acid sequence, 846 residues long: Protein kintoun (846 aa).

Disordered stretches follow at residues 216–240 (TAEE…GKPE), 372–405 (LRHF…DSKA), 574–631 (QALK…ESAC), and 762–846 (KKNQ…EMDD). Residues 372 to 382 (LRHFSREDSGV) are compositionally biased toward basic and acidic residues. Phosphoserine is present on Ser380. The segment covering 391 to 400 (PVEEDPDGEL) has biased composition (acidic residues). Basic and acidic residues predominate over residues 583–603 (GTKEEEEKGNQDQEPESDKQH). Composition is skewed to basic residues over residues 611–622 (KAGKKQRKRNKK) and 762–776 (KKNQ…RAQQ). Ser780 bears the Phosphoserine mark. The segment covering 795–809 (LKQQENQSRNCNKPN) has biased composition (polar residues).

Belongs to the PIH1 family. Kintoun subfamily. As to quaternary structure, interacts with Pp1alpha-96A, Pp1-87B, Pp1-13C and flw.

The protein resides in the cytoplasm. Required for cytoplasmic pre-assembly of axonemal dyneins, thereby playing a central role in motility in cilia and flagella. Involved in pre-assembly of dynein arm complexes in the cytoplasm before intraflagellar transport loads them for the ciliary compartment. This is Protein kintoun from Drosophila yakuba (Fruit fly).